The sequence spans 69 residues: Putative membrane protein insertion efficiency factor (69 aa).

This sequence belongs to the UPF0161 family.

It is found in the cell inner membrane. Could be involved in insertion of integral membrane proteins into the membrane. The protein is Putative membrane protein insertion efficiency factor of Novosphingobium aromaticivorans (strain ATCC 700278 / DSM 12444 / CCUG 56034 / CIP 105152 / NBRC 16084 / F199).